A 426-amino-acid chain; its full sequence is Casein kinase I (426 aa).

Positions 9–278 (YRISRKIGGG…LRKLLREMFV (270 aa)) constitute a Protein kinase domain. Residues 15 to 23 (IGGGSFGEI) and K38 each bind ATP. The active-site Proton acceptor is the D128. 2 disordered regions span residues 340–360 (TTTTTSSSQPSNVKNISTVSN) and 377–426 (PSYN…PPAK). A compositionally biased stretch (polar residues) spans 345–360 (SSSQPSNVKNISTVSN). Residues 386-404 (QSPQQTTTTTSSSNPNQTT) are compositionally biased toward low complexity. The segment covering 414-426 (PQSSSTTTKPPAK) has biased composition (polar residues).

It belongs to the protein kinase superfamily. CK1 Ser/Thr protein kinase family. Casein kinase I subfamily. As to quaternary structure, monomer. Post-translationally, autophosphorylated.

The protein localises to the cytoplasm. It is found in the nucleus. The catalysed reaction is L-seryl-[protein] + ATP = O-phospho-L-seryl-[protein] + ADP + H(+). The enzyme catalyses L-threonyl-[protein] + ATP = O-phospho-L-threonyl-[protein] + ADP + H(+). Functionally, casein kinases are operationally defined by their preferential utilization of acidic proteins such as caseins as substrates. Can phosphorylate a large number of proteins. May have a role in DNA repair mechanism and support vegetative growth of the cells. The sequence is that of Casein kinase I (cak1-1) from Dictyostelium discoideum (Social amoeba).